Reading from the N-terminus, the 232-residue chain is Cysteine proteinase inhibitor 7 (232 aa).

The signal sequence occupies residues 1–29; it reads MDMRRASMCMMLICVSLVLLSGFGQFVIC. 2 Cystatin domains span residues 46–135 and 152–214; these read GGFS…KNII and FDWR…ERGN. Positions 91–95 match the Secondary area of contact motif; sequence QVVAG. Ser181 bears the Phosphoserine mark.

It belongs to the cystatin family. Phytocystatin subfamily.

It localises to the secreted. Its function is as follows. Specific inhibitor of cysteine proteinases. Probably involved in the regulation of endogenous processes and in defense against pests and pathogens. The chain is Cysteine proteinase inhibitor 7 (CYS7) from Arabidopsis thaliana (Mouse-ear cress).